The primary structure comprises 361 residues: Phospho-N-acetylmuramoyl-pentapeptide-transferase (361 aa).

10 consecutive transmembrane segments (helical) span residues 28-48 (LAII…IEFL), 74-94 (TMGG…LADL), 99-119 (IWIT…DDYA), 133-153 (SKLL…EYLD), 168-188 (LSLD…VGSS), 203-223 (VPIA…GNLI), 236-256 (TGEL…FLWF), 263-283 (VFMG…ISVI), 288-308 (IVLA…ILQV), and 338-358 (KVVI…LSSL).

This sequence belongs to the glycosyltransferase 4 family. MraY subfamily. Requires Mg(2+) as cofactor.

The protein resides in the cell inner membrane. It catalyses the reaction UDP-N-acetyl-alpha-D-muramoyl-L-alanyl-gamma-D-glutamyl-meso-2,6-diaminopimeloyl-D-alanyl-D-alanine + di-trans,octa-cis-undecaprenyl phosphate = di-trans,octa-cis-undecaprenyl diphospho-N-acetyl-alpha-D-muramoyl-L-alanyl-D-glutamyl-meso-2,6-diaminopimeloyl-D-alanyl-D-alanine + UMP. Its pathway is cell wall biogenesis; peptidoglycan biosynthesis. Functionally, catalyzes the initial step of the lipid cycle reactions in the biosynthesis of the cell wall peptidoglycan: transfers peptidoglycan precursor phospho-MurNAc-pentapeptide from UDP-MurNAc-pentapeptide onto the lipid carrier undecaprenyl phosphate, yielding undecaprenyl-pyrophosphoryl-MurNAc-pentapeptide, known as lipid I. In Rickettsia africae (strain ESF-5), this protein is Phospho-N-acetylmuramoyl-pentapeptide-transferase.